The following is a 995-amino-acid chain: MSAQMEEPETLGKRKESESSKLRSDETPTPEPRTKRRSLKRACVHEVAVPNDYTPTKEETIHGTLDNPVFNGDMAKTYPFKLDPFQSVSVACLERKESILVSAHTSAGKTAVAEYAIAMAFRDKQRVIYTSPLKALSNQKYRELQHEFKDVGLMTGDVTLSPNASCLVMTTEILRAMLYRGSEVLKEVAWVIFDEIHYMKDRERGVVWEESIIFLPPAIKMVFLSATMSNATEFAEWICYLHKQPCHVVYTDFRPTPLQHYAFPMGGGGLYLVVDDNEQFREDSFVKMQDTFPKPKSNDGKKSANGKSGGRGAKGGGGPGDSDVYKIVKMIMERKFEPVIIFSFSRRECEQHALSMSKLDFNTDEEKEVVEQVFNNAMQCLNEEDRSLPAIELMLPLLQRGIAVHHSGLLPVIKELVELLFQEGLVKALFATETFAMGLNMPAKTVVFTAVKKWDGDSHRYIGSGEYIQMSGRAGRRGKDERGICIIMIDEQMEMNTLRDMMLGKPAPLLSTFRLSYYTILNLLSRAEGQFTAEHVIRHSFHQFQHEKALPDIGNKVSKLEEEAAILNASGEAEVAEYHNLQFDIAKHEKKLMSEIIRPERVLCFLDTGRLVKIREGGTDWGWGVVVNVVKNSSVGTGSASSHGGGYIVDTLLHCSTGFSENGAKPKPCPPRAGEKGEMHVVPVQLPLISALSRLRISVPSDLRPVEARQSILLALQELSSRFPLGFPKLHPVKDMNIQDTEIVDLVSQIEEVEQKLLAHPMHKSEDDQQIKSFQRKAEVNYEIQQLKSKMRDSQLQKFRDELKNRSRVLKKLGHIDADGVVQVKGRAACLIDTGDELLVTELMFNGTFNDLDHHQVAALASCFIPVDKSNEQVNLRNELTKPLQQLQDSARKIAEIQHECKLEIDVEEYVESTIRPFLMDVIYSWSKGASFAEIIQMTDIFEGSIIRSARRLDEFLNQLRAAAEAVGESSLESKFAAASESLRRGIMFANSLYL.

The interval 1–42 (MSAQMEEPETLGKRKESESSKLRSDETPTPEPRTKRRSLKRA) is disordered. An N-acetylserine modification is found at serine 2. Residues 10-26 (TLGKRKESESSKLRSDE) show a composition bias toward basic and acidic residues. A Helicase ATP-binding domain is found at 90 to 246 (VACLERKESI…WICYLHKQPC (157 aa)). 103-110 (AHTSAGKT) contributes to the ATP binding site. The DEIH box motif lies at 194-197 (DEIH). The tract at residues 290-318 (DTFPKPKSNDGKKSANGKSGGRGAKGGGG) is disordered. The segment covering 307–318 (KSGGRGAKGGGG) has biased composition (gly residues). The 202-residue stretch at 323-524 (DVYKIVKMIM…LSYYTILNLL (202 aa)) folds into the Helicase C-terminal domain.

Belongs to the DExH box helicase family. SKI2 subfamily. Expressed in inflorescences, leaves, stems, and roots.

The protein localises to the nucleus. It is found in the nucleoplasm. It catalyses the reaction ATP + H2O = ADP + phosphate + H(+). Functionally, ATP-dependent RNA helicase that associates with the RNA exosome complex, with the cap binding complex (CBC) and with the NEXT-like complex. Involved in the degradation of a large number of non-coding nuclear exosome substrates such as snoRNA and miRNA precursors, incompletely spliced mRNAs, and spurious transcripts produced from pseudogenes and intergenic regions. Involved in the maintenance of homeotic B and C gene expression in the reproductive whorls. Regulates floral organ spacing and identity, probably through the regulation of protein synthesis or mRNA degradation. In Arabidopsis thaliana (Mouse-ear cress), this protein is DExH-box ATP-dependent RNA helicase DExH10.